The following is a 594-amino-acid chain: ATP-dependent lipid A-core flippase (594 aa).

Helical transmembrane passes span phenylalanine 35–valine 55, phenylalanine 64–leucine 84, alanine 135–valine 155, valine 161–valine 181, valine 262–alanine 282, and isoleucine 289–leucine 309. Residues valine 36 to arginine 318 enclose the ABC transmembrane type-1 domain. The ABC transporter domain maps to leucine 350–isoleucine 588. Glycine 384–threonine 391 contributes to the ATP binding site.

It belongs to the ABC transporter superfamily. Lipid exporter (TC 3.A.1.106) family. As to quaternary structure, homodimer.

It localises to the cell inner membrane. It catalyses the reaction ATP + H2O + lipid A-core oligosaccharideSide 1 = ADP + phosphate + lipid A-core oligosaccharideSide 2.. Involved in lipopolysaccharide (LPS) biosynthesis. Translocates lipid A-core from the inner to the outer leaflet of the inner membrane. Transmembrane domains (TMD) form a pore in the inner membrane and the ATP-binding domain (NBD) is responsible for energy generation. The sequence is that of ATP-dependent lipid A-core flippase from Cupriavidus metallidurans (strain ATCC 43123 / DSM 2839 / NBRC 102507 / CH34) (Ralstonia metallidurans).